The following is a 1134-amino-acid chain: Phospholipid-transporting ATPase IH (1134 aa).

Over 1 to 61 the chain is Cytoplasmic; the sequence is MDCSLVRTLV…SSKYTFWNFI (61 aa). A helical transmembrane segment spans residues 62–82; sequence PKNLFEQFRRVANFYFLIIFL. Residues 83–88 lie on the Extracellular side of the membrane; that stretch reads VQLIID. Residues 89–110 form a helical membrane-spanning segment; sequence TPTSPVTSGLPLFFVITVTAIK. Residues 111–296 lie on the Cytoplasmic side of the membrane; it reads QGYEDWLRHK…SAVEKSMNAF (186 aa). A helical transmembrane segment spans residues 297-318; it reads LIVYLCILISKALINTVLKYMW. At 319–349 the chain is on the extracellular side; the sequence is QSEPFRDEPWYNQKTESERQRNLFLKAFTDF. The chain crosses the membrane as a helical span at residues 350-372; sequence LAFMVLFNYIIPVSMYVTVEMQK. Residues 373 to 881 lie on the Cytoplasmic side of the membrane; that stretch reads FLGSYFITWD…GHFYYIRISE (509 aa). The 4-aspartylphosphate intermediate role is filled by Asp-414. ATP-binding residues include Asp-414, Lys-415, Thr-416, Glu-511, Phe-553, Lys-576, Arg-607, Thr-687, Gly-688, and Asp-689. Mg(2+) is bound at residue Asp-414. A Mg(2+)-binding site is contributed by Thr-416. Ser-738 carries the post-translational modification Phosphoserine. 2 residues coordinate ATP: Arg-798 and Lys-804. Asp-825 is a Mg(2+) binding site. The ATP site is built by Asn-828 and Asp-829. A Mg(2+)-binding site is contributed by Asp-829. The helical transmembrane segment at 882 to 902 threads the bilayer; that stretch reads LVQYFFYKNVCFIFPQFLYQF. The Extracellular portion of the chain corresponds to 903 to 914; the sequence is FCGFSQQTLYDT. A helical transmembrane segment spans residues 915–934; sequence AYLTLYNISFTSLPILLYSL. At 935 to 964 the chain is on the cytoplasmic side; the sequence is MEQHVGIDVLKRDPTLYRDVAKNALLRWRV. Residues 965–986 form a helical membrane-spanning segment; the sequence is FIYWTLLGLFDALVFFFGAYFV. Topologically, residues 987–1000 are extracellular; that stretch reads FENTTVTSNGQIFG. The helical transmembrane segment at 1001 to 1023 threads the bilayer; that stretch reads NWTFGTLVFTVMVFTVTLKLALD. The Cytoplasmic portion of the chain corresponds to 1024 to 1029; that stretch reads THYWTW. Residues 1030 to 1050 form a helical membrane-spanning segment; the sequence is INHFVIWGSLLFYVVFSLLWG. Residues 1051 to 1068 lie on the Extracellular side of the membrane; that stretch reads GVIWPFLNYQRMYYVFIQ. The helical transmembrane segment at 1069–1093 threads the bilayer; it reads MLSSGPAWLAIVLLVTISLLPDVLK. The Cytoplasmic portion of the chain corresponds to 1094-1134; it reads KVLCRQLWPTATERVQTKSQCLSVEQSTIFMLSQTSSSLSF.

It belongs to the cation transport ATPase (P-type) (TC 3.A.3) family. Type IV subfamily. As to quaternary structure, component of a P4-ATPase flippase complex which consists of a catalytic alpha subunit ATP11A and an accessory beta subunit TMEM30A. The cofactor is Mg(2+). In terms of processing, proteolytically cleaved by CASP3. Widely expressed. Expressed in myoblasts.

It localises to the cell membrane. The protein resides in the early endosome. Its subcellular location is the recycling endosome. It is found in the endoplasmic reticulum membrane. It carries out the reaction ATP + H2O + phospholipidSide 1 = ADP + phosphate + phospholipidSide 2.. The catalysed reaction is a 1,2-diacyl-sn-glycero-3-phospho-L-serine(out) + ATP + H2O = a 1,2-diacyl-sn-glycero-3-phospho-L-serine(in) + ADP + phosphate + H(+). The enzyme catalyses a 1,2-diacyl-sn-glycero-3-phosphoethanolamine(out) + ATP + H2O = a 1,2-diacyl-sn-glycero-3-phosphoethanolamine(in) + ADP + phosphate + H(+). The flippase activity is inactivated by caspase-mediated cleavage in apoptotic cells, allowing for PS exposure on the cell surface and engulfment of apoptotic cells by macrophages. The ATPase activity is up-regulated by aminophospholipids PS and PE and down-regulated by increasing intracellular Ca2+ levels. Functionally, catalytic component of a P4-ATPase flippase complex which catalyzes the hydrolysis of ATP coupled to the transport of aminophospholipids, phosphatidylserines (PS) and phosphatidylethanolamines (PE), from the outer to the inner leaflet of the plasma membrane. Does not show flippase activity toward phosphatidylcholine (PC). Contributes to the maintenance of membrane lipid asymmetry with a specific role in morphogenesis of muscle cells. In myoblasts, mediates PS enrichment at the inner leaflet of plasma membrane, triggering PIEZO1-dependent Ca2+ influx and Rho GTPases signal transduction, subsequently leading to the assembly of cortical actomyosin fibers and myotube formation. May be involved in the uptake of farnesyltransferase inhibitor drugs, such as lonafarnib. The chain is Phospholipid-transporting ATPase IH (ATP11A) from Homo sapiens (Human).